The chain runs to 420 residues: Trophoblast glycoprotein (420 aa).

A signal peptide spans M1–S31. The Extracellular portion of the chain corresponds to S32–S355. The LRRNT domain occupies S53–A91. Cystine bridges form between C62/C68 and C66/C77. Residue N81 is glycosylated (N-linked (GlcNAc...) asparagine). 7 LRR repeats span residues Y92–R113, P116–E139, L141–S163, P172–L204, L209–Q232, L233–R255, and N256–N275. The N-linked (GlcNAc...) asparagine glycan is linked to N124. Residue N275 is glycosylated (N-linked (GlcNAc...) asparagine). Positions G283–P346 constitute an LRRCT domain. Disulfide bonds link C298/C323 and C300/C344. A helical transmembrane segment spans residues Y356–L376. Residues N377 to V420 are Cytoplasmic-facing. S418 carries the post-translational modification Phosphoserine.

Highly glycosylated. In terms of tissue distribution, expressed by all types of trophoblasts as early as 9 weeks of development. Specific for trophoblastic cells except for amniotic epithelium. In adult tissues, the expression is limited to a few epithelial cell types but is found on a variety of carcinoma.

The protein localises to the cell membrane. May function as an inhibitor of Wnt/beta-catenin signaling by indirectly interacting with LRP6 and blocking Wnt3a-dependent LRP6 internalization. This is Trophoblast glycoprotein (TPBG) from Homo sapiens (Human).